The following is a 712-amino-acid chain: NURS complex subunit red1 (712 aa).

Residues methionine 1–glutamate 22 are compositionally biased toward basic and acidic residues. Disordered stretches follow at residues methionine 1 to proline 71, asparagine 107 to glutamine 195, and aspartate 323 to methionine 348. A coiled-coil region spans residues isoleucine 5–glutamate 32. Residues glutamate 23–valine 42 show a composition bias toward acidic residues. Low complexity predominate over residues serine 130 to serine 141. Polar residues-rich tracts occupy residues phenylalanine 178–threonine 193 and asparagine 327–methionine 348. Residues serine 351–lysine 379 are a coiled coil. Residues proline 428–threonine 447 are disordered. Residues alanine 471 to serine 501 are a coiled coil. The span at glutamine 545–glutamate 567 shows a compositional bias: polar residues. A disordered region spans residues glutamine 545–threonine 568. Residues phenylalanine 618 to arginine 639 form a C3H1-type zinc finger.

In terms of assembly, interacts with mmi1, pla1 and rrp6.

It is found in the nucleus. Its function is as follows. Promotes the exosome-mediated degradation of mRNAs containing a DSR (determinant of selective removal) signal sequence from mitotic cells. The chain is NURS complex subunit red1 from Schizosaccharomyces pombe (strain 972 / ATCC 24843) (Fission yeast).